A 606-amino-acid polypeptide reads, in one-letter code: Medium-chain acyl-CoA ligase ACSF2, mitochondrial (606 aa).

The N-terminal 13 residues, 1–13 (MSSKILLTNLRTS), are a transit peptide targeting the mitochondrion. Residues 256–264 (TSGTTGKPK), Asp-484, Arg-499, and Lys-590 each bind ATP.

This sequence belongs to the ATP-dependent AMP-binding enzyme family.

The protein resides in the mitochondrion. It carries out the reaction a medium-chain fatty acid + ATP + CoA = a medium-chain fatty acyl-CoA + AMP + diphosphate. The enzyme catalyses octanoate + ATP + CoA = octanoyl-CoA + AMP + diphosphate. Acyl-CoA synthases catalyze the initial reaction in fatty acid metabolism, by forming a thioester with CoA. Has some preference toward medium-chain substrates. Plays a role in adipocyte differentiation. The protein is Medium-chain acyl-CoA ligase ACSF2, mitochondrial of Danio rerio (Zebrafish).